The chain runs to 404 residues: Chorismate synthase (404 aa).

NADP(+) contacts are provided by R40 and R46. FMN is bound by residues 135–137, 256–257, G300, 315–319, and R341; these read RAS, QA, and KPIST.

The protein belongs to the chorismate synthase family. As to quaternary structure, homotetramer. Requires FMNH2 as cofactor.

The enzyme catalyses 5-O-(1-carboxyvinyl)-3-phosphoshikimate = chorismate + phosphate. It functions in the pathway metabolic intermediate biosynthesis; chorismate biosynthesis; chorismate from D-erythrose 4-phosphate and phosphoenolpyruvate: step 7/7. Its function is as follows. Catalyzes the anti-1,4-elimination of the C-3 phosphate and the C-6 proR hydrogen from 5-enolpyruvylshikimate-3-phosphate (EPSP) to yield chorismate, which is the branch point compound that serves as the starting substrate for the three terminal pathways of aromatic amino acid biosynthesis. This reaction introduces a second double bond into the aromatic ring system. The chain is Chorismate synthase from Mycobacterium sp. (strain JLS).